The chain runs to 379 residues: Sialidase-2 (379 aa).

An FRIP motif motif is present at residues 20-23 (YRIP). Residues Arg21 and Arg41 each coordinate substrate. Asp46 functions as the Proton acceptor in the catalytic mechanism. The stretch at 127–138 (ITSTDHGKTWSA) is one BNR 1 repeat. The substrate site is built by Tyr179 and Tyr181. One copy of the BNR 2 repeat lies at 197–208 (FLSHDHGSTWEL). Glu218, Arg237, and Arg303 together coordinate substrate. The active-site Nucleophile is Tyr333. Glu354 is an active-site residue.

This sequence belongs to the glycosyl hydrolase 33 family.

It is found in the cytoplasm. It catalyses the reaction Hydrolysis of alpha-(2-&gt;3)-, alpha-(2-&gt;6)-, alpha-(2-&gt;8)- glycosidic linkages of terminal sialic acid residues in oligosaccharides, glycoproteins, glycolipids, colominic acid and synthetic substrates.. In terms of biological role, catalyzes the removal of sialic acid (N-acetylneuraminic acid) moieties from glycoproteins, oligosaccharides and gangliosides. This chain is Sialidase-2 (NEU2), found in Cricetulus griseus (Chinese hamster).